The sequence spans 97 residues: Putative defensin-like protein 240 (97 aa).

The first 23 residues, 1–23 (MRYTTSFIVFCFYIFLFTNLVQG), serve as a signal peptide directing secretion. 4 disulfide bridges follow: Cys-29-Cys-88, Cys-39-Cys-69, Cys-47-Cys-85, and Cys-67-Cys-87.

It belongs to the DEFL family.

The protein resides in the secreted. In Arabidopsis thaliana (Mouse-ear cress), this protein is Putative defensin-like protein 240 (SCRL18).